Consider the following 483-residue polypeptide: Islet cell autoantigen 1 (483 aa).

In terms of domain architecture, AH spans 51–254 (ASDADLDAKL…TSHTMAAIHE (204 aa)). The segment at 281-321 (EEKKKINQQESTDAAVQEPSQLISLEEENQRKESSSFKTED) is disordered. Residues 288-303 (QQESTDAAVQEPSQLI) are compositionally biased toward polar residues. A compositionally biased stretch (basic and acidic residues) spans 308–321 (ENQRKESSSFKTED).

In terms of tissue distribution, expressed abundantly in pancreas, heart and brain with low levels of expression in lung, kidney, liver and thyroid.

The protein localises to the cytoplasm. The protein resides in the cytosol. It localises to the golgi apparatus membrane. It is found in the cytoplasmic vesicle. Its subcellular location is the secretory vesicle membrane. The protein localises to the secretory vesicle. The protein resides in the synaptic vesicle membrane. May play a role in neurotransmitter secretion. The protein is Islet cell autoantigen 1 (ICA1) of Homo sapiens (Human).